Reading from the N-terminus, the 287-residue chain is uncharacterized protein (287 aa).

The region spanning 115-287 (SLLSKETIKS…KKFLKKKLIS (173 aa)) is the ATP-grasp domain.

This is an uncharacterized protein from Mycoplasma genitalium (strain ATCC 33530 / DSM 19775 / NCTC 10195 / G37) (Mycoplasmoides genitalium).